The chain runs to 431 residues: Adenylosuccinate synthetase (431 aa).

Residues 13 to 19 (GDEGKGK) and 41 to 43 (GHT) contribute to the GTP site. Asp14 functions as the Proton acceptor in the catalytic mechanism. Mg(2+) is bound by residues Asp14 and Gly41. IMP-binding positions include 14 to 17 (DEGK), 39 to 42 (NAGH), Thr130, Arg144, Gln225, Thr240, and Arg304. The Proton donor role is filled by His42. 300 to 306 (AVTGRPR) is a substrate binding site. GTP-binding positions include Arg306, 332–334 (KLD), and 415–417 (STG).

This sequence belongs to the adenylosuccinate synthetase family. As to quaternary structure, homodimer. Mg(2+) serves as cofactor.

Its subcellular location is the cytoplasm. The enzyme catalyses IMP + L-aspartate + GTP = N(6)-(1,2-dicarboxyethyl)-AMP + GDP + phosphate + 2 H(+). It functions in the pathway purine metabolism; AMP biosynthesis via de novo pathway; AMP from IMP: step 1/2. Functionally, plays an important role in the de novo pathway of purine nucleotide biosynthesis. Catalyzes the first committed step in the biosynthesis of AMP from IMP. This is Adenylosuccinate synthetase from Legionella pneumophila (strain Lens).